Reading from the N-terminus, the 660-residue chain is MAGLIPQSFIDDLINRLDIVDVVSSRVQLKKTGKNYSACCPFHKEKTPSFTVSPDKQFYYCFGCGAGGNALGFVMDHDNLDFPQAVEELARAAGMEVPREQGRRDQKPRQPTDSPLYPLLDAASEFYRQALRSHPSRKAAVDYLKGRGLSGEIARDFGLGFAPPGWDNLLKHLGADTLQQKVMIDAGLLIENAESGKRYDRFRDRVMFPIRDSRGRIIAFGGRVLGDDKPKYLNSPETPVFHKGQELYGLYEARKHNRNLDEIIVVEGYMDVIALAQQGLRNAVATLGTATSEEHLKRLFRVVPSVLFCFDGDQAGRKAAWRALESTLSNLQDGRRARFLFLPEGEDPDSLVRAEGTDAFMARINQHSQPLADYFFEQLGVEADPRSLEGKAHMATLAAPLIEKIPGANLRQLMRNRLKEITGLDPQQVEQLAQQAPATSSMPDYDPGYDYDAMASYTPDYGDMPQHDYAPVHQEQAWKPNKGGSKKPWSDKPWDKNRKGGKPWQQRDEAPPRVPAPVEPPTLAALRTLLHHPLLAGKVEDASHFADEEHLYSQLLVALIEAAQKNPGLSSMQLIARWHGTEQGRLLRALAEKEWLIVADNLEQQFFDTITSLSARQRERSLEQLLRKSRQSELTSEEKTQLLALLSRNVPAQTPTSSGA.

The CHC2-type zinc-finger motif lies at 40–64 (CPFHKEKTPSFTVSPDKQFYYCFGC). The disordered stretch occupies residues 94–115 (GMEVPREQGRRDQKPRQPTDSP). A compositionally biased stretch (basic and acidic residues) spans 97-110 (VPREQGRRDQKPRQ). The Toprim domain occupies 261 to 343 (DEIIVVEGYM…GRRARFLFLP (83 aa)). Mg(2+) contacts are provided by Glu-267, Asp-311, and Asp-313. Disordered stretches follow at residues 425–449 (DPQQVEQLAQQAPATSSMPDYDPGY) and 476–519 (QAWK…APVE). Residues 428–442 (QVEQLAQQAPATSSM) show a composition bias toward polar residues. Residues 488–498 (PWSDKPWDKNR) are compositionally biased toward basic and acidic residues.

This sequence belongs to the DnaG primase family. In terms of assembly, monomer. Interacts with DnaB. Zn(2+) serves as cofactor. Mg(2+) is required as a cofactor.

The enzyme catalyses ssDNA + n NTP = ssDNA/pppN(pN)n-1 hybrid + (n-1) diphosphate.. Its function is as follows. RNA polymerase that catalyzes the synthesis of short RNA molecules used as primers for DNA polymerase during DNA replication. This is DNA primase from Pseudomonas putida (strain ATCC 47054 / DSM 6125 / CFBP 8728 / NCIMB 11950 / KT2440).